We begin with the raw amino-acid sequence, 93 residues long: Small ribosomal subunit protein uS19 (93 aa).

This sequence belongs to the universal ribosomal protein uS19 family.

Its function is as follows. Protein S19 forms a complex with S13 that binds strongly to the 16S ribosomal RNA. The sequence is that of Small ribosomal subunit protein uS19 from Phytoplasma australiense.